A 1775-amino-acid polypeptide reads, in one-letter code: ATP-dependent RNA helicase DEAH12, chloroplastic (1775 aa).

A chloroplast-targeting transit peptide spans 1-33 (MRNSFPPSDGGRSATDRRQQSSHSSSTNRYNSR). The interval 1–77 (MRNSFPPSDG…NPSSGYSPPV (77 aa)) is disordered. The span at 21–34 (SSHSSSTNRYNSRS) shows a compositional bias: low complexity. Residues 35 to 60 (AQSSPPLNHRPTWNQQHSQYPNSNFP) are compositionally biased toward polar residues. A Helicase ATP-binding domain is found at 316–480 (LKKIHREQIM…FFSCGILLVN (165 aa)). 329-336 (GETGSGKS) is an ATP binding site. Residues 427 to 430 (DEAH) carry the DEAH box motif. The Helicase C-terminal domain maps to 510–676 (DVVKMAVEIH…VALLRMLALG (167 aa)). Residues 1560 to 1767 (IEVECPICLS…EPCYAHLRTI (208 aa)) are TRIAD supradomain. The Zn(2+) site is built by Cys1564, Cys1567, Cys1580, His1582, Cys1585, Cys1588, Cys1607, Cys1612, Cys1652, Cys1657, Cys1675, Cys1678, Cys1683, Cys1686, His1691, Cys1696, Cys1722, and Cys1725. The RING-type 1 zinc finger occupies 1564 to 1612 (CPICLSEVDDGYSLEGCSHLFCKACLLEQFEASMRNFDAFPILCSHIDC). Residues 1631–1696 (DELFSASLSS…HLEYHPLITC (66 aa)) form an IBR-type zinc finger. The segment at 1722–1750 (CPICKSTIEKTDGCNHMKCRCGKHICWTC) adopts an RING-type 2; atypical zinc-finger fold. The active site involves Cys1735. Zn(2+) is bound by residues Cys1740 and Cys1742.

This sequence belongs to the DEAD box helicase family. DEAH subfamily.

It is found in the plastid. It localises to the chloroplast. It carries out the reaction ATP + H2O = ADP + phosphate + H(+). The polypeptide is ATP-dependent RNA helicase DEAH12, chloroplastic (Arabidopsis thaliana (Mouse-ear cress)).